Reading from the N-terminus, the 161-residue chain is uncharacterized protein (161 aa).

This is an uncharacterized protein from Mycobacterium bovis (strain ATCC BAA-935 / AF2122/97).